Here is a 391-residue protein sequence, read N- to C-terminus: Ammonium transporter Amt1 (391 aa).

The Extracellular segment spans residues 1–7 (MSDGNVA). A helical transmembrane segment spans residues 8 to 27 (WILASTALVMLMVPGVGFFY). The Cytoplasmic segment spans residues 28–38 (AGMVRRKNAVN). A helical transmembrane segment spans residues 39–57 (MIALSFISLIITVLLWIFY). Residues 58–89 (GYSVSFGNDISGIIGGLNYALLSGVKGEDLLF) lie on the Extracellular side of the membrane. Residues 90 to 106 (MMYQMMFAAVTIAILTS) traverse the membrane as a helical segment. The Cytoplasmic segment spans residues 107-113 (AIAERAK). The helical transmembrane segment at 114-137 (VSSFILLSALWLTFVYAPFAHWLW) threads the bilayer. At 138-152 (GGGWLAKLGALDFAG) the chain is on the extracellular side. A helical transmembrane segment spans residues 153–170 (GMVVHISSGFAALAVAMT). Residues 171–188 (IGKRAGFEEYSIEPHSIP) are Cytoplasmic-facing. The chain crosses the membrane as a helical span at residues 189 to 208 (LTLIGAALLWFGWFGFNGGS). At 209 to 217 (ALAANDVAI) the chain is on the extracellular side. A helical membrane pass occupies residues 218-237 (NAVVVTNTSAAVAGFVWMVI). The Cytoplasmic segment spans residues 238 to 245 (GWIKGKPG). Residues 246–263 (SLGIVSGAIAGLAAITPA) form a helical membrane-spanning segment. At 264–268 (AGFVD) the chain is on the extracellular side. A helical transmembrane segment spans residues 269 to 287 (VKGAIVIGLVAGIVCYLAM). The Cytoplasmic portion of the chain corresponds to 288–300 (DFRIKKKIDESLD). A helical membrane pass occupies residues 301–319 (AWAIHGIGGLWGSVAVGIL). The Extracellular segment spans residues 320–337 (ANPEVNGYAGLLFGNPQL). A helical membrane pass occupies residues 338-363 (LVSQLIAVASTTAYAFLVTLILAKAV). Topologically, residues 364–391 (DAAVGLRVSSQEEYVGLDLSQHEEVAYT) are cytoplasmic.

The protein belongs to the ammonia transporter channel (TC 1.A.11.2) family. In terms of assembly, homotrimer.

It is found in the cell membrane. Its function is as follows. Involved in the uptake of ammonium/ammonia (NH(4)(+)/NH(3)). Transport is electrogenic. Transport the ammonium and methylammonium cation with high specificity. The chain is Ammonium transporter Amt1 from Archaeoglobus fulgidus (strain ATCC 49558 / DSM 4304 / JCM 9628 / NBRC 100126 / VC-16).